Consider the following 255-residue polypeptide: Small ribosomal subunit protein uS2 (255 aa).

This sequence belongs to the universal ribosomal protein uS2 family.

The chain is Small ribosomal subunit protein uS2 from Streptococcus pyogenes serotype M49 (strain NZ131).